The sequence spans 969 residues: Alpha-glucosidase (969 aa).

Residues M1–G24 form the signal peptide. N37, N67, N99, N116, N139, N146, N209, N245, N249, N331, N406, N429, N462, and N470 each carry an N-linked (GlcNAc...) asparagine glycan. D481 functions as the Nucleophile in the catalytic mechanism. Residue E484 is part of the active site. Residues N520, N523, and N589 are each glycosylated (N-linked (GlcNAc...) asparagine). D647 (proton donor) is an active-site residue. N-linked (GlcNAc...) asparagine glycosylation is found at N648, N801, N810, N821, N885, N915, N934, N942, N954, and N966.

The protein belongs to the glycosyl hydrolase 31 family.

It is found in the secreted. The catalysed reaction is Hydrolysis of terminal, non-reducing (1-&gt;4)-linked alpha-D-glucose residues with release of alpha-D-glucose.. Hydrolyzes malto-oligosaccharides, but has a low activity toward soluble starch. In Schizosaccharomyces pombe (strain 972 / ATCC 24843) (Fission yeast), this protein is Alpha-glucosidase (agl1).